The sequence spans 196 residues: Small ribosomal subunit protein uS4c (196 aa).

A disordered region spans residues 15–43 (LGALPGLTRKTPKSGSNQKKKFHSGKKEQ). Positions 89–150 (MRLDNILFRL…NQRSKRLVQN (62 aa)) constitute an S4 RNA-binding domain.

This sequence belongs to the universal ribosomal protein uS4 family. As to quaternary structure, part of the 30S ribosomal subunit. Contacts protein S5. The interaction surface between S4 and S5 is involved in control of translational fidelity.

It localises to the plastid. Its subcellular location is the chloroplast. Its function is as follows. One of the primary rRNA binding proteins, it binds directly to 16S rRNA where it nucleates assembly of the body of the 30S subunit. In terms of biological role, with S5 and S12 plays an important role in translational accuracy. In Bothriochloa ischaemum (Yellow bluestem), this protein is Small ribosomal subunit protein uS4c (rps4).